The sequence spans 531 residues: Peptide chain release factor 3 (531 aa).

The region spanning 10-278 (RRRRTFAIIS…SLIDWAPAPK (269 aa)) is the tr-type G domain. GTP-binding positions include 19-26 (SHPDAGKT), 87-91 (DTPGH), and 141-144 (NKYD).

The protein belongs to the TRAFAC class translation factor GTPase superfamily. Classic translation factor GTPase family. PrfC subfamily.

The protein localises to the cytoplasm. Functionally, increases the formation of ribosomal termination complexes and stimulates activities of RF-1 and RF-2. It binds guanine nucleotides and has strong preference for UGA stop codons. It may interact directly with the ribosome. The stimulation of RF-1 and RF-2 is significantly reduced by GTP and GDP, but not by GMP. The protein is Peptide chain release factor 3 of Neisseria meningitidis serogroup C / serotype 2a (strain ATCC 700532 / DSM 15464 / FAM18).